Consider the following 234-residue polypeptide: Ankyrin repeat-containing protein C6C3.08 (234 aa).

5 ANK repeats span residues 36–66 (DKRT…KPDE), 70–100 (AGWT…DVDP), 106–135 (GGQT…ELIR), 140–169 (QGQT…PLNT), and 173–203 (YGFT…TLRK).

The chain is Ankyrin repeat-containing protein C6C3.08 from Schizosaccharomyces pombe (strain 972 / ATCC 24843) (Fission yeast).